Consider the following 95-residue polypeptide: Aspartyl/glutamyl-tRNA(Asn/Gln) amidotransferase subunit C (95 aa).

This sequence belongs to the GatC family. As to quaternary structure, heterotrimer of A, B and C subunits.

It catalyses the reaction L-glutamyl-tRNA(Gln) + L-glutamine + ATP + H2O = L-glutaminyl-tRNA(Gln) + L-glutamate + ADP + phosphate + H(+). The catalysed reaction is L-aspartyl-tRNA(Asn) + L-glutamine + ATP + H2O = L-asparaginyl-tRNA(Asn) + L-glutamate + ADP + phosphate + 2 H(+). In terms of biological role, allows the formation of correctly charged Asn-tRNA(Asn) or Gln-tRNA(Gln) through the transamidation of misacylated Asp-tRNA(Asn) or Glu-tRNA(Gln) in organisms which lack either or both of asparaginyl-tRNA or glutaminyl-tRNA synthetases. The reaction takes place in the presence of glutamine and ATP through an activated phospho-Asp-tRNA(Asn) or phospho-Glu-tRNA(Gln). The sequence is that of Aspartyl/glutamyl-tRNA(Asn/Gln) amidotransferase subunit C from Brucella melitensis biotype 2 (strain ATCC 23457).